A 328-amino-acid polypeptide reads, in one-letter code: DNA-directed RNA polymerase subunit alpha (328 aa).

The interval 1 to 230 (MSNHGLQMPE…DHVSFFIQLE (230 aa)) is alpha N-terminal domain (alpha-NTD). Residues 248-328 (RIRELLAQPV…EEYLEEKKAS (81 aa)) form an alpha C-terminal domain (alpha-CTD) region.

The protein belongs to the RNA polymerase alpha chain family. In terms of assembly, homodimer. The RNAP catalytic core consists of 2 alpha, 1 beta, 1 beta' and 1 omega subunit. When a sigma factor is associated with the core the holoenzyme is formed, which can initiate transcription.

The enzyme catalyses RNA(n) + a ribonucleoside 5'-triphosphate = RNA(n+1) + diphosphate. Its function is as follows. DNA-dependent RNA polymerase catalyzes the transcription of DNA into RNA using the four ribonucleoside triphosphates as substrates. The protein is DNA-directed RNA polymerase subunit alpha of Salinibacter ruber (strain DSM 13855 / M31).